Reading from the N-terminus, the 313-residue chain is Short-chain dehydrogenase/reductase family 9C member 7 (313 aa).

29-53 (FITGCDSGFGNLLARQLVDRGMRVL) is a binding site for NADP(+). S160 contributes to the substrate binding site. Y172 acts as the Proton acceptor in catalysis. S185 is modified (phosphoserine).

Belongs to the short-chain dehydrogenases/reductases (SDR) family.

It localises to the cytoplasm. The enzyme catalyses a N-[omega-(9R,10R)-epoxy-(13R)-hydroxy-(11E)-octadecenoyloxy]acyl-beta-D-glucosyl-(1&lt;-&gt;1)-sphing-4E-enine + NAD(+) = a N-[omega-(9R,10R)-epoxy-13-oxo-(11E)-octadecenoyloxy]acyl-beta-D-glucosyl-(1&lt;-&gt;1)-sphing-4E-enine + NADH + H(+). It catalyses the reaction a N-[omega-(9R,10R)-epoxy-(13R)-hydroxy-(11E)-octadecenoyloxy]-acylsphing-4E-enine + NAD(+) = a N-[omega-(9R,10R)-epoxy-13-oxo-(11E)-octadecenoyloxy]-acylsphing-4E-enine + NADH + H(+). Its function is as follows. Plays a crucial role in the formation of the epidermal permeability barrier. Catalyzes the NAD+-dependent dehydrogenation of the linoleate 9,10-trans-epoxy-11E-13-alcohol esterified in omega-O-acylceramides (such as in N-[omega-(9R,10R)-epoxy-(13R)-hydroxy-(11E)-octadecenoyloxy]-acylsphing-4E-enine) to the corresponding 13-ketone, the reactive moiety required for binding of epidermal ceramides to proteins. Displays weak conversion of all-trans-retinal to all-trans-retinol in the presence of NADH. Has apparently no steroid dehydrogenase activity. This chain is Short-chain dehydrogenase/reductase family 9C member 7 (SDR9C7), found in Bos taurus (Bovine).